The chain runs to 65 residues: Small ribosomal subunit protein bS21 (65 aa).

The disordered stretch occupies residues 45–65 (GRLKRSRSRRRAQRANEERNS). The segment covering 48-57 (KRSRSRRRAQ) has biased composition (basic residues).

This sequence belongs to the bacterial ribosomal protein bS21 family.

In Chlorobium phaeobacteroides (strain DSM 266 / SMG 266 / 2430), this protein is Small ribosomal subunit protein bS21.